Reading from the N-terminus, the 517-residue chain is GMP synthase [glutamine-hydrolyzing] (517 aa).

The 192-residue stretch at 11–202 (KIIVLDYGSQ…AFDVCHAEAN (192 aa)) folds into the Glutamine amidotransferase type-1 domain. C88 (nucleophile) is an active-site residue. Catalysis depends on residues H176 and E178. Residues 203–392 (WSMDDFITKQ…LGMPHSLVWR (190 aa)) enclose the GMPS ATP-PPase domain. 230–236 (SGGVDSS) provides a ligand contact to ATP.

As to quaternary structure, homodimer.

The catalysed reaction is XMP + L-glutamine + ATP + H2O = GMP + L-glutamate + AMP + diphosphate + 2 H(+). The protein operates within purine metabolism; GMP biosynthesis; GMP from XMP (L-Gln route): step 1/1. Catalyzes the synthesis of GMP from XMP. This Lacticaseibacillus rhamnosus (Lactobacillus rhamnosus) protein is GMP synthase [glutamine-hydrolyzing] (guaA).